Consider the following 272-residue polypeptide: Testis-specific gene 13 protein (272 aa).

The protein is Testis-specific gene 13 protein (TSGA13) of Bos taurus (Bovine).